A 389-amino-acid polypeptide reads, in one-letter code: Formate-dependent phosphoribosylglycinamide formyltransferase (389 aa).

Residues 12-13 (EL) and Glu-72 each bind N(1)-(5-phospho-beta-D-ribosyl)glycinamide. ATP contacts are provided by residues Arg-104, Lys-145, 150 to 155 (SSGKGQ), 185 to 188 (EEFI), and Glu-193. The 193-residue stretch at 109-301 (DLAAKELGLK…EFELHLRAVL (193 aa)) folds into the ATP-grasp domain. Residues Glu-258 and Glu-271 each contribute to the Mg(2+) site. N(1)-(5-phospho-beta-D-ribosyl)glycinamide contacts are provided by residues Asp-278, Lys-350, and 357–358 (RR).

It belongs to the PurK/PurT family. In terms of assembly, homodimer.

The enzyme catalyses N(1)-(5-phospho-beta-D-ribosyl)glycinamide + formate + ATP = N(2)-formyl-N(1)-(5-phospho-beta-D-ribosyl)glycinamide + ADP + phosphate + H(+). It functions in the pathway purine metabolism; IMP biosynthesis via de novo pathway; N(2)-formyl-N(1)-(5-phospho-D-ribosyl)glycinamide from N(1)-(5-phospho-D-ribosyl)glycinamide (formate route): step 1/1. Functionally, involved in the de novo purine biosynthesis. Catalyzes the transfer of formate to 5-phospho-ribosyl-glycinamide (GAR), producing 5-phospho-ribosyl-N-formylglycinamide (FGAR). Formate is provided by PurU via hydrolysis of 10-formyl-tetrahydrofolate. This Phocaeicola vulgatus (strain ATCC 8482 / DSM 1447 / JCM 5826 / CCUG 4940 / NBRC 14291 / NCTC 11154) (Bacteroides vulgatus) protein is Formate-dependent phosphoribosylglycinamide formyltransferase.